Here is a 155-residue protein sequence, read N- to C-terminus: Endoribonuclease YbeY (155 aa).

Zn(2+)-binding residues include His120, His124, and His130.

The protein belongs to the endoribonuclease YbeY family. It depends on Zn(2+) as a cofactor.

The protein localises to the cytoplasm. Functionally, single strand-specific metallo-endoribonuclease involved in late-stage 70S ribosome quality control and in maturation of the 3' terminus of the 16S rRNA. This Staphylococcus aureus (strain bovine RF122 / ET3-1) protein is Endoribonuclease YbeY.